A 545-amino-acid polypeptide reads, in one-letter code: Mesoderm induction early response protein 2 (545 aa).

Serine 11 is modified (phosphoserine). The tract at residues aspartate 100–proline 189 is disordered. The segment covering glutamine 140 to histidine 153 has biased composition (polar residues). Residues lysine 195 to valine 292 form the ELM2 domain. One can recognise an SANT domain in the interval aspartate 297 to arginine 349. A disordered region spans residues tyrosine 364 to proline 464.

In terms of assembly, part of a complex containing at least CDYL, MIER1, MIER2, HDAC1 and HDAC2.

The protein resides in the nucleus. Functionally, transcriptional repressor. This Homo sapiens (Human) protein is Mesoderm induction early response protein 2 (MIER2).